We begin with the raw amino-acid sequence, 602 residues long: Elongation factor 4 (602 aa).

A tr-type G domain is found at 7-189 (SKIRNFCIIA…AIVRRVPPPQ (183 aa)). GTP is bound by residues 19–24 (DHGKST) and 136–139 (NKVD).

This sequence belongs to the TRAFAC class translation factor GTPase superfamily. Classic translation factor GTPase family. LepA subfamily.

Its subcellular location is the cell inner membrane. It carries out the reaction GTP + H2O = GDP + phosphate + H(+). Its function is as follows. Required for accurate and efficient protein synthesis under certain stress conditions. May act as a fidelity factor of the translation reaction, by catalyzing a one-codon backward translocation of tRNAs on improperly translocated ribosomes. Back-translocation proceeds from a post-translocation (POST) complex to a pre-translocation (PRE) complex, thus giving elongation factor G a second chance to translocate the tRNAs correctly. Binds to ribosomes in a GTP-dependent manner. This is Elongation factor 4 from Prochlorococcus marinus (strain MIT 9301).